Here is a 156-residue protein sequence, read N- to C-terminus: MPLPLQPMPEPLIKPLADAAPGENPVHVAANLQTFLALDFGLKRTGFAVGNRLLRTAQPQGTIAAEGDARFVKIALQLKEWQPDALVVGVPFHPDGAAHENTLRARRFARQLQGRFKLPVFEVDERYTTTEALGRGARDADAMAACIILEQFLRSI.

This sequence belongs to the YqgF nuclease family.

It localises to the cytoplasm. In terms of biological role, could be a nuclease involved in processing of the 5'-end of pre-16S rRNA. The polypeptide is Putative pre-16S rRNA nuclease (Albidiferax ferrireducens (strain ATCC BAA-621 / DSM 15236 / T118) (Rhodoferax ferrireducens)).